The following is a 992-amino-acid chain: Translation initiation factor IF-2 (992 aa).

Disordered regions lie at residues 154 to 173 (RRLR…EREA) and 338 to 399 (AAPG…RPES). The tr-type G domain maps to 492-661 (PRAPVVTVMG…LLQAEVLELK (170 aa)). A G1 region spans residues 501-508 (GHVDHGKT). 501–508 (GHVDHGKT) provides a ligand contact to GTP. Residues 526–530 (GITQH) form a G2 region. Residues 547-550 (DTPG) are G3. Residues 547-551 (DTPGH) and 601-604 (NKID) each bind GTP. The tract at residues 601–604 (NKID) is G4. Residues 637–639 (SAH) form a G5 region.

It belongs to the TRAFAC class translation factor GTPase superfamily. Classic translation factor GTPase family. IF-2 subfamily.

The protein resides in the cytoplasm. In terms of biological role, one of the essential components for the initiation of protein synthesis. Protects formylmethionyl-tRNA from spontaneous hydrolysis and promotes its binding to the 30S ribosomal subunits. Also involved in the hydrolysis of GTP during the formation of the 70S ribosomal complex. In Polaromonas naphthalenivorans (strain CJ2), this protein is Translation initiation factor IF-2.